We begin with the raw amino-acid sequence, 451 residues long: MASFHSSLLTALCTLCTYGILTMPAYGLDPNHPKHHYHKYSERLKRSNAEDSAFYLSSASESSEDLRQEPRRHILTPVRNVLKDDPCDEGLSISKLLHSIEKETNSQISVDFTILPQWFYPKKSALATSEEKQPTWQFYVSPNISWQLYNSPTAGVGSIDFSYTLIRYWNNSAQNANNAIGIAGEINDYSSRTNTLSLLTFSQTFPGEMLTVSFGQYSLYSIDGTLYDNDQQCGFLSYALSQNASATYSSGSVGAYVQFTPIPSINIQAGFQDAYSIVGSSFDVYNLTKNRYNFYGYFSWAPQSCLGAGQYSALIYSTRNVPQQPVQTTGWSLNFGQYLGEKLYVFGRWNGSTGTAVNLNRSHVLGLASANPINRNPKDLLGAACSMSKVNPKVVTDKKIRKYETVIETFATVGFGPHLSLSPDLQVYIHPARRPDRRSATVYSIRANFFV.

The signal sequence occupies residues 1 to 27 (MASFHSSLLTALCTLCTYGILTMPAYG).

It belongs to the OprB family.

It localises to the cell outer membrane. In terms of biological role, facilitates L-arginine uptake, as part of the AaxABC system. The arginine uptake by the bacterium in the macrophage may be a virulence factor against the host innate immune response. In Chlamydia caviae (strain ATCC VR-813 / DSM 19441 / 03DC25 / GPIC) (Chlamydophila caviae), this protein is Porin AaxA (aaxA).